The primary structure comprises 2346 residues: Acetyl-CoA carboxylase 1 (2346 aa).

Met1 is subject to N-acetylmethionine. Residues Ser5, Ser23, Ser25, Ser29, Ser34, Ser48, Ser50, and Ser53 each carry the phosphoserine modification. A Phosphothreonine modification is found at Thr58. Ser78 carries the phosphoserine modification. Ser80 is subject to Phosphoserine; by AMPK. The Biotin carboxylation domain occupies 117–618; sequence VIEKVLIANN…DTGWLDRLIA (502 aa). In terms of domain architecture, ATP-grasp spans 275–466; sequence SKRILNVPQE…LPAAQLQIAM (192 aa). Position 315–320 (315–320) interacts with ATP; it reads GGGGKG. Mg(2+)-binding residues include Glu424, Glu437, and Asn439. Mn(2+)-binding residues include Glu424, Glu437, and Asn439. The active site involves Arg441. Thr610 bears the Phosphothreonine mark. The Biotinyl-binding domain occupies 745 to 819; it reads FEKENDPSVL…DPGCVIAKMQ (75 aa). Residue Lys786 is modified to N6-biotinyllysine. 4 positions are modified to phosphoserine: Ser835, Ser1201, Ser1216, and Ser1218. Phosphothreonine is present on Thr1227. 3 positions are modified to phosphoserine: Ser1259, Ser1263, and Ser1273. Lys1334 is modified (N6-acetyllysine). Residues 1576 to 1914 enclose the CoA carboxyltransferase N-terminal domain; the sequence is PYVTKDLLQS…SVYSSVPLLN (339 aa). The tract at residues 1576 to 2234 is carboxyltransferase; the sequence is PYVTKDLLQS…EDLVKKKIHN (659 aa). Residues Arg1823, Lys2127, and Arg2129 each contribute to the CoA site. In terms of domain architecture, CoA carboxyltransferase C-terminal spans 1918-2234; sequence PIDRVIEFVP…EDLVKKKIHN (317 aa). Position 2153 is a phosphothreonine (Thr2153).

Monomer, homodimer, and homotetramer. Can form filamentous polymers. Interacts in its inactive phosphorylated form with the BRCT domains of BRCA1 which prevents ACACA dephosphorylation and inhibits lipid synthesis. Interacts with MID1IP1; interaction with MID1IP1 promotes oligomerization and increases its activity. It depends on Mg(2+) as a cofactor. The cofactor is Mn(2+). Requires biotin as cofactor. Post-translationally, phosphorylation on Ser-1263 is required for interaction with BRCA1. In terms of processing, phosphorylation at Ser-80 by AMPK inactivates enzyme activity. The biotin cofactor is covalently attached to the central biotinyl-binding domain and is required for the catalytic activity. As to expression, expressed at high levels in mammary gland.

Its subcellular location is the cytoplasm. The protein resides in the cytosol. It carries out the reaction hydrogencarbonate + acetyl-CoA + ATP = malonyl-CoA + ADP + phosphate + H(+). Its pathway is lipid metabolism; malonyl-CoA biosynthesis; malonyl-CoA from acetyl-CoA: step 1/1. Its activity is regulated as follows. Inhibited by phosphorylation. Citrate promotes oligomerization of the protein into filaments that correspond to the most active form of the carboxylase. Its function is as follows. Cytosolic enzyme that catalyzes the carboxylation of acetyl-CoA to malonyl-CoA, the first and rate-limiting step of de novo fatty acid biosynthesis. This is a 2 steps reaction starting with the ATP-dependent carboxylation of the biotin carried by the biotin carboxyl carrier (BCC) domain followed by the transfer of the carboxyl group from carboxylated biotin to acetyl-CoA. In Ovis aries (Sheep), this protein is Acetyl-CoA carboxylase 1.